A 919-amino-acid chain; its full sequence is Phosphoenolpyruvate carboxylase (919 aa).

Residues H138 and K579 contribute to the active site.

Belongs to the PEPCase type 1 family. Mg(2+) serves as cofactor.

It catalyses the reaction oxaloacetate + phosphate = phosphoenolpyruvate + hydrogencarbonate. Functionally, forms oxaloacetate, a four-carbon dicarboxylic acid source for the tricarboxylic acid cycle. This chain is Phosphoenolpyruvate carboxylase, found in Corynebacterium glutamicum (Brevibacterium saccharolyticum).